The sequence spans 236 residues: 7-cyano-7-deazaguanine synthase (236 aa).

7-17 contributes to the ATP binding site; sequence CSGGLDSVSLA. Residues C185, C193, C196, and C199 each coordinate Zn(2+).

The protein belongs to the QueC family. The cofactor is Zn(2+).

It catalyses the reaction 7-carboxy-7-deazaguanine + NH4(+) + ATP = 7-cyano-7-deazaguanine + ADP + phosphate + H2O + H(+). The protein operates within purine metabolism; 7-cyano-7-deazaguanine biosynthesis. Catalyzes the ATP-dependent conversion of 7-carboxy-7-deazaguanine (CDG) to 7-cyano-7-deazaguanine (preQ(0)). The protein is 7-cyano-7-deazaguanine synthase of Agrobacterium fabrum (strain C58 / ATCC 33970) (Agrobacterium tumefaciens (strain C58)).